The primary structure comprises 299 residues: Lymphocyte antigen 6 complex locus protein G6f (299 aa).

A signal peptide spans 1 to 19 (MAVLFLLLLFLCGLPQAET). The 105-residue stretch at 20 to 124 (DSIQAIYVVL…YRYQNWRVYD (105 aa)) folds into the Ig-like V-type domain. Residues 20-237 (DSIQAIYVVL…APSADWDVAW (218 aa)) are Extracellular-facing. Cys37 and Cys108 form a disulfide bridge. Asn90 is a glycosylation site (N-linked (GlcNAc...) asparagine). A helical membrane pass occupies residues 238-258 (ILTLLLTVGQGFTIVVLGVML). At 259–299 (WRQRAQGAQHRNASFPQFKPEIQVYENIHLAHLSPPAPKTR) the chain is on the cytoplasmic side. Phosphotyrosine is present on Tyr283.

As to quaternary structure, homodimer; disulfide-linked. Interacts with GRB2 and GRB7 in a phosphorylation-dependent manner. N-glycosylated.

It is found in the cell membrane. May play a role in the downstream signal transduction pathways involving GRB2 and GRB7. The polypeptide is Lymphocyte antigen 6 complex locus protein G6f (LY6G6F) (Bos taurus (Bovine)).